Consider the following 61-residue polypeptide: Small ribosomal subunit protein uS14 (61 aa).

Residues Cys24, Cys27, Cys40, and Cys43 each contribute to the Zn(2+) site.

Belongs to the universal ribosomal protein uS14 family. Zinc-binding uS14 subfamily. As to quaternary structure, part of the 30S ribosomal subunit. Contacts proteins S3 and S10. Zn(2+) is required as a cofactor.

Its function is as follows. Binds 16S rRNA, required for the assembly of 30S particles and may also be responsible for determining the conformation of the 16S rRNA at the A site. The polypeptide is Small ribosomal subunit protein uS14 (Aliarcobacter butzleri (strain RM4018) (Arcobacter butzleri)).